Consider the following 243-residue polypeptide: tRNA (guanine-N(1)-)-methyltransferase (243 aa).

Residues G112 and 131–136 (LGDYVL) each bind S-adenosyl-L-methionine.

It belongs to the RNA methyltransferase TrmD family. In terms of assembly, homodimer.

It is found in the cytoplasm. The enzyme catalyses guanosine(37) in tRNA + S-adenosyl-L-methionine = N(1)-methylguanosine(37) in tRNA + S-adenosyl-L-homocysteine + H(+). Functionally, specifically methylates guanosine-37 in various tRNAs. In Leuconostoc mesenteroides subsp. mesenteroides (strain ATCC 8293 / DSM 20343 / BCRC 11652 / CCM 1803 / JCM 6124 / NCDO 523 / NBRC 100496 / NCIMB 8023 / NCTC 12954 / NRRL B-1118 / 37Y), this protein is tRNA (guanine-N(1)-)-methyltransferase.